A 311-amino-acid polypeptide reads, in one-letter code: MGKENCTTVAEFILLGLSDVPELRVCLFLLFLLIYGVTLLANLGMTALIQVSSRLHTPVYFFLSHLSFVDFCYSSIIVPKMLANIFNKDKAISFLGCMVQFYLFCTCGVTEVFLLAVMAYDRFVAICNPLLYMVTMSQKLRVELTSCCYFCGTVCSLIHSSLALRILFYRSNVINHFFCDLPPLLSLACSDVTVNETLLFLVATLNESVTIMIILTSYLLILTTILKIHSAESRHKAFSTCASHLTAITVSHGTILYIYCRPSSGNSGDVDKVATVFYTVVIPMLNPLIYSLRNKDVNKALRKVMGSKIHS.

The Extracellular portion of the chain corresponds to 1–25 (MGKENCTTVAEFILLGLSDVPELRV). N-linked (GlcNAc...) asparagine glycosylation occurs at N5. The helical transmembrane segment at 26-46 (CLFLLFLLIYGVTLLANLGMT) threads the bilayer. The Cytoplasmic segment spans residues 47–54 (ALIQVSSR). A helical membrane pass occupies residues 55-75 (LHTPVYFFLSHLSFVDFCYSS). Over 76–99 (IIVPKMLANIFNKDKAISFLGCMV) the chain is Extracellular. An intrachain disulfide couples C97 to C189. Residues 100 to 120 (QFYLFCTCGVTEVFLLAVMAY) traverse the membrane as a helical segment. At 121 to 139 (DRFVAICNPLLYMVTMSQK) the chain is on the cytoplasmic side. A helical membrane pass occupies residues 140–160 (LRVELTSCCYFCGTVCSLIHS). Topologically, residues 161–196 (SLALRILFYRSNVINHFFCDLPPLLSLACSDVTVNE) are extracellular. N195 is a glycosylation site (N-linked (GlcNAc...) asparagine). The chain crosses the membrane as a helical span at residues 197-217 (TLLFLVATLNESVTIMIILTS). Topologically, residues 218–237 (YLLILTTILKIHSAESRHKA) are cytoplasmic. The chain crosses the membrane as a helical span at residues 238–258 (FSTCASHLTAITVSHGTILYI). Residues 259–271 (YCRPSSGNSGDVD) lie on the Extracellular side of the membrane. Residues 272–292 (KVATVFYTVVIPMLNPLIYSL) traverse the membrane as a helical segment. Over 293 to 311 (RNKDVNKALRKVMGSKIHS) the chain is Cytoplasmic.

This sequence belongs to the G-protein coupled receptor 1 family.

The protein localises to the cell membrane. Its function is as follows. Odorant receptor. This chain is Olfactory receptor 5L2 (OR5L2), found in Homo sapiens (Human).